Here is a 130-residue protein sequence, read N- to C-terminus: Putative ankyrin repeat protein R886 (130 aa).

ANK repeat units lie at residues 21 to 50, 54 to 83, and 85 to 113; these read NYDR…DITA, YGFT…SIIK, and DNLT…DIRY.

The chain is Putative ankyrin repeat protein R886 from Acanthamoeba polyphaga (Amoeba).